A 274-amino-acid polypeptide reads, in one-letter code: Triosephosphate isomerase (274 aa).

Substrate is bound at residue 13-15 (NWK). Residue His-98 is the Electrophile of the active site. Glu-170 (proton acceptor) is an active-site residue. 2 residues coordinate substrate: Gly-176 and Ser-216.

This sequence belongs to the triosephosphate isomerase family. Homodimer.

It localises to the cytoplasm. It carries out the reaction D-glyceraldehyde 3-phosphate = dihydroxyacetone phosphate. The protein operates within carbohydrate biosynthesis; gluconeogenesis. It functions in the pathway carbohydrate degradation; glycolysis; D-glyceraldehyde 3-phosphate from glycerone phosphate: step 1/1. Functionally, involved in the gluconeogenesis. Catalyzes stereospecifically the conversion of dihydroxyacetone phosphate (DHAP) to D-glyceraldehyde-3-phosphate (G3P). The sequence is that of Triosephosphate isomerase from Onion yellows phytoplasma (strain OY-M).